A 103-amino-acid polypeptide reads, in one-letter code: c-Myc-binding protein (103 aa).

This sequence belongs to the AMY1 family. As to quaternary structure, binds via its C-terminal region to the N-terminal region of MYC. Associates with AKAP1/S-AKAP84. Interacts with MYCBPAP. Interacts with CFAP91.

The protein resides in the cytoplasm. It localises to the nucleus. Functionally, may control the transcriptional activity of MYC. Stimulates the activation of E box-dependent transcription by MYC. The chain is c-Myc-binding protein (Mycbp) from Mus musculus (Mouse).